The following is a 342-amino-acid chain: Deoxyguanosinetriphosphate triphosphohydrolase-like protein (342 aa).

The HD domain maps to 75–190 (RLVHTLEVSQ…VRFADKIAYV (116 aa)).

Belongs to the dGTPase family. Type 2 subfamily.

This Clostridium perfringens (strain 13 / Type A) protein is Deoxyguanosinetriphosphate triphosphohydrolase-like protein.